The chain runs to 911 residues: Brevican core protein (911 aa).

The first 22 residues, 1-22, serve as a signal peptide directing secretion; sequence MAQLFLPLLAALVLAQAPAALA. The 120-residue stretch at 36-155 folds into the Ig-like V-type domain; that stretch reads RVRIAGDAPL…SSDAVEVKVK (120 aa). 5 cysteine pairs are disulfide-bonded: Cys-57–Cys-137, Cys-179–Cys-250, Cys-203–Cys-224, Cys-277–Cys-352, and Cys-301–Cys-322. N-linked (GlcNAc...) asparagine glycosylation is present at Asn-130. 2 consecutive Link domains span residues 157–252 and 257–354; these read VVFL…YCYA and GELF…YCFR. Residue Asn-337 is glycosylated (N-linked (GlcNAc...) asparagine). A disordered region spans residues 391–641; that stretch reads QLPQEATESE…PTDSASRGGV (251 aa). Ser-418 is modified (phosphoserine). A glycan (O-linked (Xyl...) (chondroitin sulfate) serine) is linked at Ser-418. Over residues 454–478 the composition is skewed to acidic residues; that stretch reads EEEEKYEDEEEKEEEEEEEEVEDEA. 2 O-glycosylated at two sites regions span residues 520–530 and 540–545; these read SPLPDGESEAS and TETLPT. The tract at residues 569–575 is O-glycosylated at one site; sequence TGGPELS. Polar residues predominate over residues 612 to 627; the sequence is EDNSGRTAPAGTSVQA. A lipid anchor (GPI-anchor amidated alanine) is attached at Ala-646. The region spanning 646-682 is the EGF-like domain; sequence ASGDCVPSPCHNGGTCLEEEEGVRCLCLPGYGGDLCD. Cystine bridges form between Cys-650-Cys-661, Cys-655-Cys-670, Cys-672-Cys-681, Cys-688-Cys-699, Cys-716-Cys-808, Cys-784-Cys-800, Cys-815-Cys-858, and Cys-844-Cys-871. A C-type lectin domain is found at 695–809; the sequence is FQGACYKHFS…CNYHLSYTCK (115 aa). The Sushi domain occupies 813 to 873; sequence VSCGPPPELP…WEAPQISCVP (61 aa). Residues Ser-905 and Ser-906 are each glycosylated (O-linked (GalNAc...) serine).

The protein belongs to the aggrecan/versican proteoglycan family. Interacts with TNR. In terms of processing, O-glycosylated; contains chondroitin sulfate. O-glycosylated with a core 1 or possibly core 8 glycan. As to expression, expressed in the retina, specifically in the inner nuclear layer, inner plexiform layer and ganglion cell layer (at protein level). Detected in cerebrospinal fluid (at protein level). Detected in urine (at protein level).

The protein resides in the secreted. It is found in the extracellular space. Its subcellular location is the extracellular matrix. It localises to the membrane. Functionally, may play a role in the terminally differentiating and the adult nervous system during postnatal development. Could stabilize interactions between hyaluronan (HA) and brain proteoglycans. This chain is Brevican core protein (BCAN), found in Homo sapiens (Human).